The following is a 79-amino-acid chain: Short neurotoxin 8 (79 aa).

A signal peptide spans 1 to 21 (MKTLLLTLVMVTIMCLDLGYT). Intrachain disulfides connect Cys24–Cys41, Cys34–Cys59, Cys63–Cys71, and Cys72–Cys77.

The protein belongs to the three-finger toxin family. Short-chain subfamily. Type III alpha-neurotoxin sub-subfamily. As to expression, expressed by the venom gland.

It localises to the secreted. Its function is as follows. Binds with high affinity to muscle nicotinic acetylcholine receptor (nAChR) and hinders acetylcholine binding to the receptor, thereby impairing neuromuscular transmission. Causes muscle paralysis, spasms and increased respiration. This chain is Short neurotoxin 8, found in Pseudonaja textilis (Eastern brown snake).